The chain runs to 642 residues: Threonine--tRNA ligase (642 aa).

Residues 1-61 (MPVITLPDGS…ESDAQLAIIT (61 aa)) enclose the TGS domain. The interval 243 to 534 (DHRKIGKQLD…LTEEYAGFYP (292 aa)) is catalytic. Residues Cys-334, His-385, and His-511 each contribute to the Zn(2+) site.

This sequence belongs to the class-II aminoacyl-tRNA synthetase family. In terms of assembly, homodimer. The cofactor is Zn(2+).

It localises to the cytoplasm. It catalyses the reaction tRNA(Thr) + L-threonine + ATP = L-threonyl-tRNA(Thr) + AMP + diphosphate + H(+). Its function is as follows. Catalyzes the attachment of threonine to tRNA(Thr) in a two-step reaction: L-threonine is first activated by ATP to form Thr-AMP and then transferred to the acceptor end of tRNA(Thr). Also edits incorrectly charged L-seryl-tRNA(Thr). This Serratia proteamaculans (strain 568) protein is Threonine--tRNA ligase.